The sequence spans 309 residues: HPr kinase/phosphorylase (309 aa).

Active-site residues include His138 and Lys159. 153–160 lines the ATP pocket; that stretch reads GQSGVGKS. Ser160 contacts Mg(2+). Residue Asp177 is the Proton acceptor; for phosphorylation activity. Proton donor; for dephosphorylation activity of the active site. The segment at 201 to 210 is important for the catalytic mechanism of both phosphorylation and dephosphorylation; sequence LEIRGLGIIN. Mg(2+) is bound at residue Glu202. Arg243 is an active-site residue. The important for the catalytic mechanism of dephosphorylation stretch occupies residues 264–269; it reads PVRPGR.

The protein belongs to the HPrK/P family. In terms of assembly, homohexamer. It depends on Mg(2+) as a cofactor.

The catalysed reaction is [HPr protein]-L-serine + ATP = [HPr protein]-O-phospho-L-serine + ADP + H(+). It carries out the reaction [HPr protein]-O-phospho-L-serine + phosphate + H(+) = [HPr protein]-L-serine + diphosphate. In terms of biological role, catalyzes the ATP- as well as the pyrophosphate-dependent phosphorylation of a specific serine residue in HPr, a phosphocarrier protein of the phosphoenolpyruvate-dependent sugar phosphotransferase system (PTS). HprK/P also catalyzes the pyrophosphate-producing, inorganic phosphate-dependent dephosphorylation (phosphorolysis) of seryl-phosphorylated HPr (P-Ser-HPr). The two antagonistic activities of HprK/P are regulated by several intracellular metabolites, which change their concentration in response to the absence or presence of rapidly metabolisable carbon sources (glucose, fructose, etc.) in the growth medium. Also phosphorylates/dephosphorylates the HPr-like catabolite repression protein crh on a specific serine residue. Therefore, by controlling the phosphorylation state of HPr and crh, HPrK/P is a sensor enzyme that plays a major role in the regulation of carbon metabolism and sugar transport: it mediates carbon catabolite repression (CCR), and regulates PTS-catalyzed carbohydrate uptake and inducer exclusion. This Bacillus cytotoxicus (strain DSM 22905 / CIP 110041 / 391-98 / NVH 391-98) protein is HPr kinase/phosphorylase.